Here is an 875-residue protein sequence, read N- to C-terminus: Outer membrane usher protein FocD (875 aa).

A signal peptide spans 1–38 (MFFGDGGQLLSDKSLTGSAGGGNNRMKFNILPLAFFIG). A disulfide bridge connects residues C852 and C874.

Belongs to the fimbrial export usher family.

Its subcellular location is the cell outer membrane. Involved in the export and assembly of the F1C fimbriae subunits across the outer membrane. This chain is Outer membrane usher protein FocD (focD), found in Escherichia coli.